A 922-amino-acid polypeptide reads, in one-letter code: Neuropilin-1 (922 aa).

An N-terminal signal peptide occupies residues methionine 1–alanine 21. Residues phenylalanine 22 to proline 855 lie on the Extracellular side of the membrane. Disulfide bonds link cysteine 27/cysteine 54, cysteine 82/cysteine 104, and cysteine 147/cysteine 173. 2 CUB domains span residues cysteine 27 to phenylalanine 141 and cysteine 147 to leucine 265. Residue asparagine 150 is glycosylated (N-linked (GlcNAc...) asparagine). Ca(2+)-binding residues include glutamate 195, aspartate 209, and aspartate 250. Residues cysteine 206 and cysteine 228 are joined by a disulfide bond. 3 N-linked (GlcNAc...) asparagine glycosylation sites follow: asparagine 261, asparagine 300, and asparagine 522. 2 disulfide bridges follow: cysteine 275/cysteine 424 and cysteine 431/cysteine 583. 2 consecutive F5/8 type C domains span residues cysteine 275–cysteine 424 and cysteine 431–cysteine 583. Serine 612 carries O-linked (Xyl...) (chondroitin sulfate) serine; alternate glycosylation. Residue serine 612 is glycosylated (O-linked (Xyl...) (heparan sulfate) serine; alternate). The MAM domain maps to threonine 645–lysine 811. The O-linked (Xyl...) (chondroitin sulfate) serine glycan is linked to serine 829. Asparagine 841 carries N-linked (GlcNAc...) asparagine glycosylation. Residues isoleucine 856 to cysteine 880 form a helical membrane-spanning segment. Residues alanine 881 to alanine 922 are Cytoplasmic-facing. Position 893 is a phosphoserine (serine 893).

It belongs to the neuropilin family. Homodimer, and heterodimer with NRP2. Binds PLXNB1. Interacts with FER. Interacts with VEGFA. Interacts with ABCB8/MITOSUR in mitochondria. As to expression, found in the embryonic nervous system. Expressed in dorsal root ganglia.

It localises to the mitochondrion membrane. The protein resides in the cell membrane. Its subcellular location is the cytoplasm. Cell-surface receptor involved in the development of the cardiovascular system, in angiogenesis, in the formation of certain neuronal circuits and in organogenesis outside the nervous system. Mediates the chemorepulsant activity of semaphorins. Recognizes a C-end rule (CendR) motif R/KXXR/K on its ligands which causes cellular internalization and vascular leakage. It binds to semaphorin 3A, the PLGF-2 isoform of PGF, the VEGF165 isoform of VEGFA and VEGFB. Coexpression with KDR results in increased VEGF165 binding to KDR as well as increased chemotaxis. Regulates VEGF-induced angiogenesis. Binding to VEGFA initiates a signaling pathway needed for motor neuron axon guidance and cell body migration, including for the caudal migration of facial motor neurons from rhombomere 4 to rhombomere 6 during embryonic development. Regulates mitochondrial iron transport via interaction with ABCB8/MITOSUR. This Rattus norvegicus (Rat) protein is Neuropilin-1 (Nrp1).